A 218-amino-acid polypeptide reads, in one-letter code: Protein P9 (218 aa).

The protein resides in the virion membrane. The sequence is that of Protein P9 (IX) from Pseudoalteromonas espejiana (Bacteriophage PM2).